The sequence spans 258 residues: (7aS)-7a-methyl-1,5-dioxo-2,3,5,6,7,7a-hexahydro-1H-indene-carboxyl-CoA hydrolase (258 aa).

It belongs to the enoyl-CoA hydratase/isomerase family.

It catalyses the reaction (7aS)-7a-methyl-1,5-dioxo-2,3,5,6,7,7a-hexahydro-1H-indene-carboxyl-CoA + H2O = (3E)-2-(2-carboxylatoethyl)-3-methyl-6-oxocyclohex-1-ene-1-carboxyl-CoA + H(+). Its pathway is steroid metabolism; cholesterol degradation. Its function is as follows. Involved in the final steps of cholesterol and steroid degradation. Catalyzes the hydrolytic ring D opening of (7aS)-7a-methyl-1,5-dioxo-2,3,5,6,7,7a-hexahydro-1H-indene-carboxyl-CoA (HIEC-CoA) to (3E)-2-(2-carboxylatoethyl)-3-methyl-6-oxocyclohex-1-ene-1-carboxyl-CoA (COCHEA-CoA). The protein is (7aS)-7a-methyl-1,5-dioxo-2,3,5,6,7,7a-hexahydro-1H-indene-carboxyl-CoA hydrolase of Rhodococcus jostii (strain RHA1).